The sequence spans 385 residues: 1-deoxy-D-xylulose 5-phosphate reductoisomerase 1 (385 aa).

NADPH is bound by residues threonine 11, glycine 12, serine 13, isoleucine 14, asparagine 39, and asparagine 122. Position 123 (lysine 123) interacts with 1-deoxy-D-xylulose 5-phosphate. Glutamate 124 serves as a coordination point for NADPH. Aspartate 148 lines the Mn(2+) pocket. Positions 149, 150, 174, and 197 each coordinate 1-deoxy-D-xylulose 5-phosphate. Mn(2+) is bound at residue glutamate 150. NADPH is bound at residue glycine 203. Positions 210, 215, 216, and 219 each coordinate 1-deoxy-D-xylulose 5-phosphate. Glutamate 219 lines the Mn(2+) pocket.

The protein belongs to the DXR family. It depends on Mg(2+) as a cofactor. Requires Mn(2+) as cofactor.

The enzyme catalyses 2-C-methyl-D-erythritol 4-phosphate + NADP(+) = 1-deoxy-D-xylulose 5-phosphate + NADPH + H(+). It functions in the pathway isoprenoid biosynthesis; isopentenyl diphosphate biosynthesis via DXP pathway; isopentenyl diphosphate from 1-deoxy-D-xylulose 5-phosphate: step 1/6. Catalyzes the NADPH-dependent rearrangement and reduction of 1-deoxy-D-xylulose-5-phosphate (DXP) to 2-C-methyl-D-erythritol 4-phosphate (MEP). This is 1-deoxy-D-xylulose 5-phosphate reductoisomerase 1 from Bacillus cereus (strain ATCC 14579 / DSM 31 / CCUG 7414 / JCM 2152 / NBRC 15305 / NCIMB 9373 / NCTC 2599 / NRRL B-3711).